Reading from the N-terminus, the 607-residue chain is Phosphogluconate dehydratase (607 aa).

2 residues coordinate [4Fe-4S] cluster: Cys-156 and Cys-223.

This sequence belongs to the IlvD/Edd family. [4Fe-4S] cluster serves as cofactor.

The enzyme catalyses 6-phospho-D-gluconate = 2-dehydro-3-deoxy-6-phospho-D-gluconate + H2O. Its pathway is carbohydrate metabolism; Entner-Doudoroff pathway. Its function is as follows. Catalyzes the dehydration of 6-phospho-D-gluconate to 2-dehydro-3-deoxy-6-phospho-D-gluconate. This is Phosphogluconate dehydratase from Zymomonas mobilis subsp. mobilis (strain ATCC 31821 / ZM4 / CP4).